The sequence spans 449 residues: MNTKQQLVFIMADYRLGLFVFRNDLRVEDNLALYEAAQRSETLICCFCFNPTQNKYGHYGIPAMGKHRFTFLQQSLKQLRTELEMRGQKLIVLTGTFDRILTELISERQVDAIFLSQHQGYYERLQLGLLQQRFPFLPFHETPNNTLFSEQELPFELADLPETFSQFRKKVEPLSRNFSVQPVNALPSLPKNISYPGFKAETLNELASDDFEGGERAALTHLTSYFSGESAGTYKQTRNALDDFSSSTKFSPWLAQGCLSVRQIMAALRAYETEFGENESSYWISFELLWREYFFWYALKHGKRLFAFSGLSGKSPKTSFYSERFQKWCSGNTPYPIVNACMKQLNATGYMSNRGRQLVASCFVHELSLDWRYGAAYFEQQLIDYDVSSNWGNWQYLAGVGADPRGHRQFNLEKQTERYDPDNEFIERWAGDLSGQPIDSVDAADWPVR.

Residues 15 to 147 (RLGLFVFRND…PFHETPNNTL (133 aa)) form the Photolyase/cryptochrome alpha/beta domain.

It belongs to the DNA photolyase class-1 family. Requires FAD as cofactor. (6R)-5,10-methylene-5,6,7,8-tetrahydrofolate serves as cofactor.

Its function is as follows. May have a photoreceptor function. Binds DNA; probably functions as a transcriptional repressor. The chain is Cryptochrome DASH (cry) from Idiomarina loihiensis (strain ATCC BAA-735 / DSM 15497 / L2-TR).